The following is a 270-amino-acid chain: Small ribosomal subunit protein uS3 (270 aa).

Positions 38-106 constitute a KH type-2 domain; that stretch reads IRQMLTRGME…QVQLNILEVK (69 aa). Residues 212–270 form a disordered region; that stretch reads EREAAQAAQRAAGPQRRERPGRRRRGGGGGGGQQQQQAEKATAQATEAAKAAKSGNEGS. Composition is skewed to low complexity over residues 216-225 and 245-263; these read AQAAQRAAGP and QQQQ…AKAA.

It belongs to the universal ribosomal protein uS3 family. In terms of assembly, part of the 30S ribosomal subunit. Forms a tight complex with proteins S10 and S14.

Its function is as follows. Binds the lower part of the 30S subunit head. Binds mRNA in the 70S ribosome, positioning it for translation. The chain is Small ribosomal subunit protein uS3 from Thermobifida fusca (strain YX).